Consider the following 741-residue polypeptide: 1,4-alpha-glucan branching enzyme GlgB (741 aa).

Asp420 serves as the catalytic Nucleophile. Glu473 serves as the catalytic Proton donor.

The protein belongs to the glycosyl hydrolase 13 family. GlgB subfamily. As to quaternary structure, monomer.

The enzyme catalyses Transfers a segment of a (1-&gt;4)-alpha-D-glucan chain to a primary hydroxy group in a similar glucan chain.. Its pathway is glycan biosynthesis; glycogen biosynthesis. Functionally, catalyzes the formation of the alpha-1,6-glucosidic linkages in glycogen by scission of a 1,4-alpha-linked oligosaccharide from growing alpha-1,4-glucan chains and the subsequent attachment of the oligosaccharide to the alpha-1,6 position. In Pseudomonas syringae pv. tomato (strain ATCC BAA-871 / DC3000), this protein is 1,4-alpha-glucan branching enzyme GlgB.